A 328-amino-acid chain; its full sequence is Aspartate carbamoyltransferase catalytic subunit (328 aa).

Residues Arg55 and Thr56 each coordinate carbamoyl phosphate. L-aspartate is bound at residue Lys83. Residues Arg105, His135, and Gln138 each coordinate carbamoyl phosphate. Residues Arg176 and Arg230 each contribute to the L-aspartate site. Residues Gly271 and Pro272 each coordinate carbamoyl phosphate.

It belongs to the aspartate/ornithine carbamoyltransferase superfamily. ATCase family. As to quaternary structure, heterododecamer (2C3:3R2) of six catalytic PyrB chains organized as two trimers (C3), and six regulatory PyrI chains organized as three dimers (R2).

It carries out the reaction carbamoyl phosphate + L-aspartate = N-carbamoyl-L-aspartate + phosphate + H(+). It participates in pyrimidine metabolism; UMP biosynthesis via de novo pathway; (S)-dihydroorotate from bicarbonate: step 2/3. Functionally, catalyzes the condensation of carbamoyl phosphate and aspartate to form carbamoyl aspartate and inorganic phosphate, the committed step in the de novo pyrimidine nucleotide biosynthesis pathway. The polypeptide is Aspartate carbamoyltransferase catalytic subunit (Streptomyces griseus subsp. griseus (strain JCM 4626 / CBS 651.72 / NBRC 13350 / KCC S-0626 / ISP 5235)).